Reading from the N-terminus, the 482-residue chain is MEQTEFKEYIHDNLALVLPKLKENDDLVKNKKMLANGLVFYYLYFSEMTDENKVSEAIKTLIKDEETLTLDQVKKRLDQLDARPVETAKKTIESILNGNCAVFINGLDKAYILTTGKKKTRSLTEPTTEKVVRGPKVAFVEDIDTNLALIRQRTSHPKLITKKIMIGENKLKPAAIMYIEGKAKKSVIKEVKARLKNIQLEDIQDSGTLEELIEDNKYSPFPQIQNTERPDKVSSALFNGRVAILVDSSPFVLLVPVSLGILMQSPDDYYERWISASLIRSLRFASIFITLFLSSIYITLVSFHQGLLPTALAVTISANRENVPFPPIFEALLMEVTIELLREAGLRLPNPLGQTIGLVGGVVIGQAAVEANLVSSILVIVVSVIALASFTVPQYGMGLSFRVLRFISMFSAAILGLYGIILFMLVVYTHLTRQTSFGSPYFSPNGFFSLKNTDDSIIRLPIKNKPKEVNNPNEPKTDSTET.

6 helical membrane-spanning segments follow: residues 242 to 262 (VAIL…LGIL), 284 to 304 (FASI…VSFH), 321 to 341 (ENVP…IELL), 351 to 371 (PLGQ…AVEA), 373 to 393 (LVSS…FTVP), and 406 to 426 (FISM…FMLV).

It belongs to the GerABKA family.

It is found in the cell membrane. Forms a complex at the inner spore membrane which acts as a receptor for L-alanine, thus is involved in the stimulation of germination in response to alanine. Can stimulate germination in the absence of GerD and GerK gene products (fructose and glucose receptors, respectively), but the response is improved in their presence. This chain is Spore germination protein A1 (gerAA), found in Bacillus subtilis (strain 168).